Consider the following 1823-residue polypeptide: Laminin subunit alpha-4 (1823 aa).

The first 24 residues, 1–24 (MALSSAWRSVLPLWLLWSAACSRA), serve as a signal peptide directing secretion. The O-linked (Xyl...) (chondroitin sulfate) serine glycan is linked to Ser-39. 12 disulfides stabilise this stretch: Cys-82-Cys-91, Cys-84-Cys-98, Cys-101-Cys-110, Cys-113-Cys-129, Cys-132-Cys-146, Cys-134-Cys-155, Cys-157-Cys-166, Cys-169-Cys-184, Cys-187-Cys-202, Cys-189-Cys-209, Cys-212-Cys-221, and Cys-224-Cys-238. Laminin EGF-like domains follow at residues 82-131 (CDCN…FCQP), 132-186 (CPCP…TCKK), and 187-240 (CDCS…NCAV). A glycan (N-linked (GlcNAc...) asparagine) is linked at Asn-104. An N-linked (GlcNAc...) asparagine glycan is attached at Asn-215. The Laminin EGF-like 4; truncated domain occupies 241–255 (CNCGGGPCDSVTGEC). Positions 256 to 832 (LEEGFEPPTG…AQTRSVASKI (577 aa)) are domain II and I. Residue Asn-315 is glycosylated (N-linked (GlcNAc...) asparagine). A coiled-coil region spans residues 320-403 (LLKTKLSERE…KIQEINNKML (84 aa)). N-linked (GlcNAc...) asparagine glycosylation is present at Asn-465. Positions 473–528 (VVLEQLDDYNAKLSDLQEALDQALNYVRDAEDMNRATAARQRDHEKQQERVREQME) form a coiled coil. Residues Asn-531, Asn-557, Asn-578, Asn-581, Asn-638, and Asn-646 are each glycosylated (N-linked (GlcNAc...) asparagine). Positions 581-614 (NLSHDLVQEAIDHAQDLQQEANELSRKLHSSDMN) form a coiled coil. Residues 662 to 724 (IIYHKDESEN…AVKQLQAAER (63 aa)) are a coiled coil. Positions 724–726 (RGD) match the Cell attachment site motif. 5 N-linked (GlcNAc...) asparagine glycosylation sites follow: Asn-742, Asn-758, Asn-761, Asn-787, and Asn-810. Positions 777–806 (AVNSARDAVRNLTEVVPQLLDQLRTVEQKR) form a coiled coil. Laminin G-like domains lie at 833–1035 (QVSM…SVPC), 1047–1227 (AASY…GYGC), and 1234–1402 (SRRA…LYEC). Cys-1005 and Cys-1035 are oxidised to a cystine. Asn-1093 is a glycosylation site (N-linked (GlcNAc...) asparagine). The cysteines at positions 1201 and 1227 are disulfide-linked. N-linked (GlcNAc...) asparagine glycans are attached at residues Asn-1288 and Asn-1366. A disulfide bridge links Cys-1370 with Cys-1402. The N-linked (GlcNAc...) asparagine glycan is linked to Asn-1418. Residues 1419–1440 (LSKPKASQNKKGGKSKDAPSWD) form a disordered region. 2 consecutive Laminin G-like domains span residues 1469-1640 (AYQY…VTPC) and 1647-1820 (TGTY…INSC). Intrachain disulfides connect Cys-1617–Cys-1640 and Cys-1792–Cys-1820.

As to quaternary structure, laminin is a complex glycoprotein, consisting of three different polypeptide chains (alpha, beta, gamma), which are bound to each other by disulfide bonds into a cross-shaped molecule comprising one long and three short arms with globules at each end. Alpha-4 is a subunit of laminin-8 (laminin-411), laminin-9 (laminin-421) and laminin-14 (laminin-423). As to expression, detected in placenta (at protein level). Detected in fibroblasts and urine (at protein level). In adult, strong expression in heart, lung, ovary small and large intestines, placenta, liver; weak or no expression in skeletal muscle, kidney, pancreas, testis, prostate, brain. High expression in fetal lung and kidney. Expression in fetal and newborn tissues is observed in certain mesenchymal cells in tissues such as smooth muscle and dermis.

Its subcellular location is the secreted. It localises to the extracellular space. The protein resides in the extracellular matrix. It is found in the basement membrane. Functionally, binding to cells via a high affinity receptor, laminin is thought to mediate the attachment, migration and organization of cells into tissues during embryonic development by interacting with other extracellular matrix components. This chain is Laminin subunit alpha-4 (LAMA4), found in Homo sapiens (Human).